Consider the following 155-residue polypeptide: Endoribonuclease YbeY (155 aa).

The Zn(2+) site is built by H120, H124, and H130.

The protein belongs to the endoribonuclease YbeY family. It depends on Zn(2+) as a cofactor.

The protein resides in the cytoplasm. Single strand-specific metallo-endoribonuclease involved in late-stage 70S ribosome quality control and in maturation of the 3' terminus of the 16S rRNA. This is Endoribonuclease YbeY from Staphylococcus epidermidis (strain ATCC 12228 / FDA PCI 1200).